Reading from the N-terminus, the 121-residue chain is C-type natriuretic peptide 4 (121 aa).

Residues 1-22 (MNLSYLVACGLLVTFLSDKMDA) form the signal peptide. A propeptide spanning residues 23–96 (QPLTPAQQKS…SRRHKSGSKK (74 aa)) is cleaved from the precursor. The interval 80–109 (LLNDQPASRRHKSGSKKGGSTSRSGCFGHK) is disordered. Residues Cys105 and Cys121 are joined by a disulfide bond.

This sequence belongs to the natriuretic peptide family. As to expression, brain, spinal cord, spleen, heart and fin, and to a lower extent in gill and ovary.

Its subcellular location is the secreted. Its function is as follows. Exhibits natriuretic and vasodepressant activity. Has cGMP-stimulating activity. May help to regulate body fluid homeostasis in a variety of aquatic environments. This Oryzias latipes (Japanese rice fish) protein is C-type natriuretic peptide 4.